The following is an 813-amino-acid chain: Fibroblast growth factor receptor 2 (813 aa).

The N-terminal stretch at 1 to 14 (MLLLALLAFLLVSR) is a signal peptide. The Extracellular portion of the chain corresponds to 18 to 367 (RPSYSMVDDT…EDNPVPYYME (350 aa)). In terms of domain architecture, Ig-like C2-type 1 spans 21 to 117 (YSMVDDTTPE…NSHFFHVNVT (97 aa)). C58 and C103 are oxidised to a cystine. 2 N-linked (GlcNAc...) asparagine glycosylation sites follow: N79 and N115. Residues 119–143 (ASSSGDDEDDNDGSEDFTNDNNNIR) form a disordered region. A compositionally biased stretch (acidic residues) spans 123–136 (GDDEDDNDGSEDFT). Ig-like C2-type domains are found at residues 145–237 (PYWT…YHLD) and 246–348 (PILQ…AWLT). The segment at 152–169 (KMEKKLHAVSAANTVKLR) is heparin-binding. The cysteines at positions 170 and 221 are disulfide-linked. N-linked (GlcNAc...) asparagine glycosylation is found at N231, N255, N287, N308, and N321. The cysteines at positions 268 and 332 are disulfide-linked. The helical transmembrane segment at 368–388 (IGIYSTGIFIIFCMVVVCVVC) threads the bilayer. Residues 389–813 (RMRQGAKKKK…FQHVNGVVKT (425 aa)) lie on the Cytoplasmic side of the membrane. Residue Y456 is modified to Phosphotyrosine; by autocatalysis. In terms of domain architecture, Protein kinase spans 471–760 (LTLGKPLGEG…LTLTTNEEYL (290 aa)). ATP contacts are provided by residues 477–485 (LGEGCFGQV), K507, 555–557 (EYA), and N561. Residue Y576 is modified to Phosphotyrosine; by autocatalysis. The active-site Proton acceptor is the D616. Phosphotyrosine; by autocatalysis is present on residues Y646, Y647, and Y759. Residues 771-792 (PSFPDSSCSASSSSGDDSVFSP) show a composition bias toward low complexity. Residues 771–801 (PSFPDSSCSASSSSGDDSVFSPDPMPHDPCL) are disordered.

The protein belongs to the protein kinase superfamily. Tyr protein kinase family. Fibroblast growth factor receptor subfamily. In terms of assembly, monomer. Homodimer after ligand binding. Autophosphorylated. Binding of FGF family members together with heparan sulfate proteoglycan or heparin promotes receptor dimerization and autophosphorylation on tyrosine residues. Autophosphorylation occurs in trans between the two FGFR molecules present in the dimer. In terms of processing, N-glycosylated in the endoplasmic reticulum. The N-glycan chains undergo further maturation to an Endo H-resistant form in the Golgi apparatus. Post-translationally, ubiquitinated. FGFR2 is rapidly ubiquitinated after autophosphorylation, leading to internalization and degradation. Subject to degradation both in lysosomes and by the proteasome. In terms of tissue distribution, expressed in the anterior neural plate in early neurula stage embryos. Later in development, the protein is also expressed in the eye anlagen, midbrain-hindbrain boundary and otic vesicle.

The protein localises to the cell membrane. The protein resides in the golgi apparatus. It is found in the cytoplasmic vesicle. The enzyme catalyses L-tyrosyl-[protein] + ATP = O-phospho-L-tyrosyl-[protein] + ADP + H(+). Its activity is regulated as follows. Present in an inactive conformation in the absence of bound ligand. Ligand binding leads to dimerization and activation by autophosphorylation on tyrosine residues. In terms of biological role, tyrosine-protein kinase that acts as a cell-surface receptor for fibroblast growth factors and plays an essential role in the regulation of cell proliferation, differentiation, migration and apoptosis, and in the regulation of embryonic development. Required for normal embryonic patterning, limb bud development, lung morphogenesis, osteogenesis and skin development. Plays an essential role in the regulation of osteoblast differentiation, proliferation and apoptosis, and is required for normal skeleton development. Promotes cell proliferation in keratinocytes and immature osteoblasts, but promotes apoptosis in differentiated osteoblasts. Phosphorylates PLCG1, FRS2 and PAK4. Ligand binding leads to the activation of several signaling cascades. Activation of PLCG1 leads to the production of the cellular signaling molecules diacylglycerol and inositol 1,4,5-trisphosphate. Phosphorylation of FRS2 triggers recruitment of GRB2, GAB1, PIK3R1 and SOS1, and mediates activation of RAS, MAPK1/ERK2, MAPK3/ERK1 and the MAP kinase signaling pathway, as well as of the AKT1 signaling pathway. FGFR2 signaling is down-regulated by ubiquitination, internalization and degradation. Mutations that lead to constitutive kinase activation or impair normal FGFR2 maturation, internalization and degradation lead to aberrant signaling. Over-expressed FGFR2 promotes activation of STAT1. The protein is Fibroblast growth factor receptor 2 (fgfr2) of Xenopus laevis (African clawed frog).